Consider the following 188-residue polypeptide: MPVAETSQGTSGVAERYASSLFELALEAGTVEAVQVELDKFGALLDESDDLKRLVASPVFSAEDQFKAISAICEKAGIAGLAVNFLKVVANNRRLFAVPGMIRAYRTIAAAHRGEITAEVTSAHALDEAQETELKAALKSVTGKDVAISVTVDPSILGGLIVKVGSRQIDTSLRTKLSTLKLALKEVG.

The protein belongs to the ATPase delta chain family. In terms of assembly, F-type ATPases have 2 components, F(1) - the catalytic core - and F(0) - the membrane proton channel. F(1) has five subunits: alpha(3), beta(3), gamma(1), delta(1), epsilon(1). F(0) has three main subunits: a(1), b(2) and c(10-14). The alpha and beta chains form an alternating ring which encloses part of the gamma chain. F(1) is attached to F(0) by a central stalk formed by the gamma and epsilon chains, while a peripheral stalk is formed by the delta and b chains.

The protein resides in the cell inner membrane. F(1)F(0) ATP synthase produces ATP from ADP in the presence of a proton or sodium gradient. F-type ATPases consist of two structural domains, F(1) containing the extramembraneous catalytic core and F(0) containing the membrane proton channel, linked together by a central stalk and a peripheral stalk. During catalysis, ATP synthesis in the catalytic domain of F(1) is coupled via a rotary mechanism of the central stalk subunits to proton translocation. Its function is as follows. This protein is part of the stalk that links CF(0) to CF(1). It either transmits conformational changes from CF(0) to CF(1) or is implicated in proton conduction. The chain is ATP synthase subunit delta from Agrobacterium fabrum (strain C58 / ATCC 33970) (Agrobacterium tumefaciens (strain C58)).